Here is a 560-residue protein sequence, read N- to C-terminus: Dihydroxy-acid dehydratase (560 aa).

Position 80 (Asp-80) interacts with Mg(2+). Cys-121 is a [2Fe-2S] cluster binding site. Residues Asp-122 and Lys-123 each contribute to the Mg(2+) site. At Lys-123 the chain carries N6-carboxylysine. A [2Fe-2S] cluster-binding site is contributed by Cys-194. Residue Glu-447 participates in Mg(2+) binding. Ser-473 functions as the Proton acceptor in the catalytic mechanism.

The protein belongs to the IlvD/Edd family. Homodimer. [2Fe-2S] cluster is required as a cofactor. Requires Mg(2+) as cofactor.

The catalysed reaction is (2R)-2,3-dihydroxy-3-methylbutanoate = 3-methyl-2-oxobutanoate + H2O. It carries out the reaction (2R,3R)-2,3-dihydroxy-3-methylpentanoate = (S)-3-methyl-2-oxopentanoate + H2O. It participates in amino-acid biosynthesis; L-isoleucine biosynthesis; L-isoleucine from 2-oxobutanoate: step 3/4. It functions in the pathway amino-acid biosynthesis; L-valine biosynthesis; L-valine from pyruvate: step 3/4. Functionally, functions in the biosynthesis of branched-chain amino acids. Catalyzes the dehydration of (2R,3R)-2,3-dihydroxy-3-methylpentanoate (2,3-dihydroxy-3-methylvalerate) into 2-oxo-3-methylpentanoate (2-oxo-3-methylvalerate) and of (2R)-2,3-dihydroxy-3-methylbutanoate (2,3-dihydroxyisovalerate) into 2-oxo-3-methylbutanoate (2-oxoisovalerate), the penultimate precursor to L-isoleucine and L-valine, respectively. In Chlorobaculum tepidum (strain ATCC 49652 / DSM 12025 / NBRC 103806 / TLS) (Chlorobium tepidum), this protein is Dihydroxy-acid dehydratase.